The sequence spans 266 residues: Small ribosomal subunit protein uS2 (266 aa).

It belongs to the universal ribosomal protein uS2 family.

The chain is Small ribosomal subunit protein uS2 from Corynebacterium diphtheriae (strain ATCC 700971 / NCTC 13129 / Biotype gravis).